The chain runs to 350 residues: uncharacterized protein (350 aa).

Over residues 197–212 (KNDNSEDNRSEDDLKS) the composition is skewed to basic and acidic residues. The disordered stretch occupies residues 197 to 217 (KNDNSEDNRSEDDLKSSQDPV).

The protein localises to the plastid. It localises to the chloroplast. This is an uncharacterized protein from Euglena gracilis.